Reading from the N-terminus, the 395-residue chain is Elongation factor Tu (395 aa).

The 195-residue stretch at 10–204 folds into the tr-type G domain; sequence KPHVNIGTIG…EVDAYIPTPE (195 aa). Residues 19-26 form a G1 region; the sequence is GHVDHGKT. GTP is bound at residue 19–26; that stretch reads GHVDHGKT. Threonine 26 contributes to the Mg(2+) binding site. Positions 60–64 are G2; the sequence is GITIS. The interval 81-84 is G3; the sequence is DCPG. GTP-binding positions include 81 to 85 and 136 to 139; these read DCPGH and NKCD. Residues 136–139 are G4; that stretch reads NKCD. Residues 174–176 form a G5 region; the sequence is SAL.

The protein belongs to the TRAFAC class translation factor GTPase superfamily. Classic translation factor GTPase family. EF-Tu/EF-1A subfamily. In terms of assembly, monomer.

The protein localises to the cytoplasm. It carries out the reaction GTP + H2O = GDP + phosphate + H(+). In terms of biological role, GTP hydrolase that promotes the GTP-dependent binding of aminoacyl-tRNA to the A-site of ribosomes during protein biosynthesis. In Bacillus cereus (strain ATCC 10987 / NRS 248), this protein is Elongation factor Tu.